The primary structure comprises 684 residues: Dipeptidyl-peptidase 5 (684 aa).

Residues 1–24 form the signal peptide; it reads MNKKIFSMMAASIIGSAAMTPSAG. WD repeat units follow at residues 87 to 127, 220 to 259, and 323 to 363; these read DTES…TERR, KPWSGIEDFSWSPDGQNIAYASRKKTGMAYSLSTNSDIYI, and TFDY…GKIR. Active-site charge relay system residues include serine 542, aspartate 627, and histidine 659.

This sequence belongs to the peptidase S9C family. As to quaternary structure, homodimer.

The protein resides in the periplasm. In terms of biological role, catalyzes the removal of dipeptides from the N-terminus of oligopeptides. Prefers Ala and hydrophobic residues except Pro at the P1 position, and has no preference for P2 residues. Shows high dipeptidyl peptidase activity toward the synthetic substrates Lys-Ala-, Gly-Phe-, Met-Leu-, and Ser-Tyr-methylcoumaryl-7-amide (MCA), and slowly hydrolyzes Val-Tyr-MCA. Is likely involved in amino acid metabolism and bacterial growth of asaccharolytic P.gingivalis, that utilizes amino acids from extracellular proteinaceous nutrients as energy and carbon sources. This chain is Dipeptidyl-peptidase 5, found in Porphyromonas gingivalis (strain ATCC 33277 / DSM 20709 / CIP 103683 / JCM 12257 / NCTC 11834 / 2561).